A 341-amino-acid chain; its full sequence is Glyceraldehyde-3-phosphate dehydrogenase, cytosolic (341 aa).

NAD(+)-binding positions include 15 to 16 (RI), Asp37, and Arg84. D-glyceraldehyde 3-phosphate is bound by residues 155-157 (SCT), Thr186, 215-216 (TG), and Arg238. The active-site Nucleophile is the Cys156. Asn320 provides a ligand contact to NAD(+).

Belongs to the glyceraldehyde-3-phosphate dehydrogenase family. As to quaternary structure, homotetramer.

The protein resides in the cytoplasm. The enzyme catalyses D-glyceraldehyde 3-phosphate + phosphate + NAD(+) = (2R)-3-phospho-glyceroyl phosphate + NADH + H(+). It functions in the pathway carbohydrate degradation; glycolysis; pyruvate from D-glyceraldehyde 3-phosphate: step 1/5. In terms of biological role, key enzyme in glycolysis that catalyzes the first step of the pathway by converting D-glyceraldehyde 3-phosphate (G3P) into 3-phospho-D-glyceroyl phosphate. Essential for the maintenance of cellular ATP levels and carbohydrate metabolism. In Magnolia liliiflora (Mulan magnolia), this protein is Glyceraldehyde-3-phosphate dehydrogenase, cytosolic (GAPC).